A 244-amino-acid polypeptide reads, in one-letter code: Small ribosomal subunit protein eS4 (244 aa).

Residues 43 to 106 (LPLLLVVRDI…DENYLVLFDE (64 aa)) enclose the S4 RNA-binding domain.

It belongs to the eukaryotic ribosomal protein eS4 family.

This chain is Small ribosomal subunit protein eS4, found in Methanococcus maripaludis (strain C6 / ATCC BAA-1332).